A 256-amino-acid chain; its full sequence is Leucyl/phenylalanyl-tRNA--protein transferase (256 aa).

A disordered region spans residues 1 to 21 (MIPWLPDDSDSAPFPPTRLAL).

The protein belongs to the L/F-transferase family.

The protein resides in the cytoplasm. The enzyme catalyses N-terminal L-lysyl-[protein] + L-leucyl-tRNA(Leu) = N-terminal L-leucyl-L-lysyl-[protein] + tRNA(Leu) + H(+). The catalysed reaction is N-terminal L-arginyl-[protein] + L-leucyl-tRNA(Leu) = N-terminal L-leucyl-L-arginyl-[protein] + tRNA(Leu) + H(+). It catalyses the reaction L-phenylalanyl-tRNA(Phe) + an N-terminal L-alpha-aminoacyl-[protein] = an N-terminal L-phenylalanyl-L-alpha-aminoacyl-[protein] + tRNA(Phe). Functionally, functions in the N-end rule pathway of protein degradation where it conjugates Leu, Phe and, less efficiently, Met from aminoacyl-tRNAs to the N-termini of proteins containing an N-terminal arginine or lysine. This is Leucyl/phenylalanyl-tRNA--protein transferase from Leptothrix cholodnii (strain ATCC 51168 / LMG 8142 / SP-6) (Leptothrix discophora (strain SP-6)).